A 142-amino-acid chain; its full sequence is Multiprotein-bridging factor 1b (142 aa).

Residues 49–75 are disordered; sequence NAGSNKAASSGTSLNTKKLDDDTENLS. Over residues 50–64 the composition is skewed to polar residues; the sequence is AGSNKAASSGTSLNT. The segment covering 65-75 has biased composition (basic and acidic residues); that stretch reads KKLDDDTENLS. The 55-residue stretch at 87-141 folds into the HTH cro/C1-type domain; it reads IMQARGEKKLTQSQLAHLINEKPQVIQEYESGKAIPNQQILSKLERALGAKLRGK. Residues 98–117 constitute a DNA-binding region (H-T-H motif); that stretch reads QSQLAHLINEKPQVIQEYES.

This sequence belongs to the MBF1 family. Expressed in leaves, roots, stems, petioles and shoots. Higher expression in flowers and siliques. Detected in leaf veins through development.

It localises to the nucleus. The protein resides in the nucleolus. In terms of biological role, transcriptional coactivator that stimulates transcriptional activity by bridging regulatory proteins and TBP, thereby recruiting TBP to promoters occupied by DNA-binding regulators. This Arabidopsis thaliana (Mouse-ear cress) protein is Multiprotein-bridging factor 1b (MBF1B).